The sequence spans 163 residues: uncharacterized protein (163 aa).

Disordered stretches follow at residues 1–78 (MHSL…NPHS) and 115–163 (PKWL…LPCH).

This is an uncharacterized protein from Homo sapiens (Human).